Consider the following 116-residue polypeptide: Iron-sulfur cluster insertion protein ErpA (116 aa).

3 residues coordinate iron-sulfur cluster: C44, C108, and C110.

It belongs to the HesB/IscA family. Homodimer. Iron-sulfur cluster is required as a cofactor.

Functionally, required for insertion of 4Fe-4S clusters for at least IspG. In Shewanella amazonensis (strain ATCC BAA-1098 / SB2B), this protein is Iron-sulfur cluster insertion protein ErpA.